Reading from the N-terminus, the 147-residue chain is Antiholin-like protein LrgA (147 aa).

The next 4 helical transmembrane spans lie at 12 to 32 (PAHFFHQVIVIALVLFVSKII), 35 to 55 (FMPIPMPASVIGLVLLFVLLC), 74 to 94 (NIGLLFVPAGISVVNSLGVIS), and 98 to 118 (FLIIGLIIVSTILLLICTGYV).

Belongs to the CidA/LrgA family. LrgA subfamily.

It localises to the cell membrane. Inhibits the expression or activity of extracellular murein hydrolases by interacting, possibly with LrgB, with the holin-like proteins CidA and/or CidB. The LrgAB and CidAB proteins may affect the proton motive force of the membrane. May be involved in programmed cell death (PCD), possibly triggering PCD in response to antibiotics and environmental stresses. The sequence is that of Antiholin-like protein LrgA from Staphylococcus aureus (strain USA300).